Consider the following 293-residue polypeptide: Probable endonuclease 4 (293 aa).

Zn(2+)-binding residues include H78, H118, E154, D188, H191, H225, D238, H240, and E270.

This sequence belongs to the AP endonuclease 2 family. Requires Zn(2+) as cofactor.

It catalyses the reaction Endonucleolytic cleavage to 5'-phosphooligonucleotide end-products.. Its function is as follows. Endonuclease IV plays a role in DNA repair. It cleaves phosphodiester bonds at apurinic or apyrimidinic (AP) sites, generating a 3'-hydroxyl group and a 5'-terminal sugar phosphate. This Vibrio vulnificus (strain YJ016) protein is Probable endonuclease 4.